The chain runs to 61 residues: UPF0434 protein Bpet2671 (61 aa).

This sequence belongs to the UPF0434 family.

The sequence is that of UPF0434 protein Bpet2671 from Bordetella petrii (strain ATCC BAA-461 / DSM 12804 / CCUG 43448).